The sequence spans 491 residues: Glycogen synthase (491 aa).

Arginine 20 provides a ligand contact to ADP-alpha-D-glucose.

This sequence belongs to the glycosyltransferase 1 family. Bacterial/plant glycogen synthase subfamily.

It catalyses the reaction [(1-&gt;4)-alpha-D-glucosyl](n) + ADP-alpha-D-glucose = [(1-&gt;4)-alpha-D-glucosyl](n+1) + ADP + H(+). It participates in glycan biosynthesis; glycogen biosynthesis. Its function is as follows. Synthesizes alpha-1,4-glucan chains using ADP-glucose. The sequence is that of Glycogen synthase from Prosthecochloris aestuarii (strain DSM 271 / SK 413).